The following is a 108-amino-acid chain: Large ribosomal subunit protein uL24 (108 aa).

It belongs to the universal ribosomal protein uL24 family. As to quaternary structure, part of the 50S ribosomal subunit.

In terms of biological role, one of two assembly initiator proteins, it binds directly to the 5'-end of the 23S rRNA, where it nucleates assembly of the 50S subunit. Functionally, one of the proteins that surrounds the polypeptide exit tunnel on the outside of the subunit. This chain is Large ribosomal subunit protein uL24, found in Mycoplasmopsis pulmonis (strain UAB CTIP) (Mycoplasma pulmonis).